A 309-amino-acid polypeptide reads, in one-letter code: MEAARTAVLRVKRKRSAEPAEALVLACKRLRSDAVESAAQKTSEGLERAAENNVFHLVATVCSQEEPVQPLLREVLRPSRDSQQRVRRNLRASAREVRQEGRYRVLSSRRSLGTTSSGQESEYTPGNPEAAGNSGFQLLDLVHEEGEPEAASAGSCKTSDPDVILCNSVELIRERLTVSEDGPGVRRQEEQKHDDYVYDIYYLETATPGWIENILSVQPYSQEWELVNDDQEPEDIYDDEDDENSENNWRNEYPEEESSDGDEDSRGSADYNSLSEEERGSSRQRMWSKYPLDVQKEFGYDSPHDLDSD.

2 disordered regions span residues 101–134 (GRYRVLSSRRSLGTTSSGQESEYTPGNPEAAGNS) and 233–287 (PEDI…QRMW). Positions 106–118 (LSSRRSLGTTSSG) are enriched in low complexity. Composition is skewed to acidic residues over residues 233–245 (PEDIYDDEDDENS) and 254–263 (PEEESSDGDE). S302 and S308 each carry phosphoserine.

The protein belongs to the IWR1/SLC7A6OS family.

It is found in the cytoplasm. The protein resides in the nucleus. Its function is as follows. Directs RNA polymerase II nuclear import. In Homo sapiens (Human), this protein is Probable RNA polymerase II nuclear localization protein SLC7A6OS (SLC7A6OS).